Reading from the N-terminus, the 490-residue chain is Betaine aldehyde dehydrogenase (490 aa).

K(+) contacts are provided by Ile27 and Asp93. 150–152 (GAW) provides a ligand contact to NAD(+). The Charge relay system role is filled by Lys162. NAD(+) is bound at residue 176–179 (KPSE). Val180 contacts K(+). Residue 230–233 (GTTT) participates in NAD(+) binding. Leu246 is a K(+) binding site. Glu252 functions as the Proton acceptor in the catalytic mechanism. NAD(+) is bound by residues Gly254, Cys286, and Glu387. Cys286 acts as the Nucleophile in catalysis. At Cys286 the chain carries Cysteine sulfenic acid (-SOH). Lys457 and Gly460 together coordinate K(+). The active-site Charge relay system is Glu464.

Belongs to the aldehyde dehydrogenase family. As to quaternary structure, dimer of dimers. It depends on K(+) as a cofactor.

It carries out the reaction betaine aldehyde + NAD(+) + H2O = glycine betaine + NADH + 2 H(+). It participates in amine and polyamine biosynthesis; betaine biosynthesis via choline pathway; betaine from betaine aldehyde: step 1/1. In terms of biological role, involved in the biosynthesis of the osmoprotectant glycine betaine. Catalyzes the irreversible oxidation of betaine aldehyde to the corresponding acid. The chain is Betaine aldehyde dehydrogenase from Pseudomonas entomophila (strain L48).